We begin with the raw amino-acid sequence, 111 residues long: Cyanovirin-N homolog (111 aa).

Belongs to the cyanovirin-N family.

Mannose-binding lectin. The sequence is that of Cyanovirin-N homolog from Neurospora crassa (strain ATCC 24698 / 74-OR23-1A / CBS 708.71 / DSM 1257 / FGSC 987).